Consider the following 462-residue polypeptide: O-methyltransferase CTB2 (462 aa).

Residue Asp-289 coordinates S-adenosyl-L-methionine. His-340 functions as the Proton acceptor in the catalytic mechanism.

Belongs to the class I-like SAM-binding methyltransferase superfamily. Cation-independent O-methyltransferase family. COMT subfamily.

It functions in the pathway mycotoxin biosynthesis. In terms of biological role, O-methyltransferase; part of the gene cluster that mediates the biosynthesis of cercosporin, a light-activated, non-host-selective toxin. The perylenequinone chromophore of cercosporin absorbs light energy to attain an electronically-activated triplet state and produces active oxygen species such as the hydroxyl radical, superoxide, hydrogen peroxide or singlet oxygen upon reaction with oxygen molecules. These reactive oxygen species cause damage to various cellular components including lipids, proteins and nucleic acids. The first step of cercosporin biosynthesis is performed by the polyketide synthase CTB1 which catalyzes the formation of nor-toralactone. The starter unit acyltransferase (SAT) domain of CTB1 initiates polyketide extension by the selective utilization of acetyl-CoA, which is elongated to the heptaketide in the beta-ketoacyl synthase (KS) domain by successive condensations with six malonyl units introduced by the malonyl acyltransferase (MAT) domain. The product template (PT) domain catalyzes C4-C9 and C2-C11 aldol cyclizations and dehydrations to a trihydroxynaphthalene, which is thought to be delivered to the thioesterase (TE) domain for product release. The bifunctional enzyme CTB3 then methylates nor-toralactone to toralactone before conducting an unusual oxidative aromatic ring opening. The O-methyltransferase CTB2 further methylates the nascent OH-6 of the CBT3 product, blocking further oxidation at this site before the reductase CTB6 reduces the 2-oxopropyl ketone at position C7, giving naphthalene. The FAD-dependent monooxygenase CTB5 in concert with the multicopper oxidase CTB12 are responsible for homodimerization of naphthalene with CTB7 installing the dioxepine moiety, finally producing cercosporin. The fasciclin domain-containing protein CTB11 might act with CTB5 and CTB12 whereas the roles of CTB9 and CTB10 have still to be elucidated. The polypeptide is O-methyltransferase CTB2 (Cercospora beticola (Sugarbeet leaf spot fungus)).